Reading from the N-terminus, the 83-residue chain is NAD(P)H-quinone oxidoreductase subunit L (83 aa).

The next 2 membrane-spanning stretches (helical) occupy residues 17–37 (VLLAYGALGGAYLLVVPLALL) and 53–73 (TAIYGMVFLFFPGLILFAPFI).

The protein belongs to the complex I NdhL subunit family. In terms of assembly, NDH-1 can be composed of about 15 different subunits; different subcomplexes with different compositions have been identified which probably have different functions.

The protein resides in the cellular thylakoid membrane. The enzyme catalyses a plastoquinone + NADH + (n+1) H(+)(in) = a plastoquinol + NAD(+) + n H(+)(out). It catalyses the reaction a plastoquinone + NADPH + (n+1) H(+)(in) = a plastoquinol + NADP(+) + n H(+)(out). NDH-1 shuttles electrons from an unknown electron donor, via FMN and iron-sulfur (Fe-S) centers, to quinones in the respiratory and/or the photosynthetic chain. The immediate electron acceptor for the enzyme in this species is believed to be plastoquinone. Couples the redox reaction to proton translocation, and thus conserves the redox energy in a proton gradient. Cyanobacterial NDH-1 also plays a role in inorganic carbon-concentration. This is NAD(P)H-quinone oxidoreductase subunit L from Synechococcus sp. (strain RCC307).